The sequence spans 152 residues: Deoxyuridine 5'-triphosphate nucleotidohydrolase (152 aa).

Substrate-binding positions include 71 to 73 (RSG), N84, 88 to 90 (LID), and M98.

Belongs to the dUTPase family. The cofactor is Mg(2+).

The catalysed reaction is dUTP + H2O = dUMP + diphosphate + H(+). The protein operates within pyrimidine metabolism; dUMP biosynthesis; dUMP from dCTP (dUTP route): step 2/2. Its function is as follows. This enzyme is involved in nucleotide metabolism: it produces dUMP, the immediate precursor of thymidine nucleotides and it decreases the intracellular concentration of dUTP so that uracil cannot be incorporated into DNA. The protein is Deoxyuridine 5'-triphosphate nucleotidohydrolase of Shewanella sediminis (strain HAW-EB3).